We begin with the raw amino-acid sequence, 443 residues long: Xaa-Pro dipeptidase (443 aa).

Residues aspartate 246, aspartate 257, histidine 339, glutamate 384, and glutamate 423 each coordinate Mn(2+).

This sequence belongs to the peptidase M24B family. Bacterial-type prolidase subfamily. The cofactor is Mn(2+).

It carries out the reaction Xaa-L-Pro dipeptide + H2O = an L-alpha-amino acid + L-proline. Its function is as follows. Splits dipeptides with a prolyl residue in the C-terminal position. The chain is Xaa-Pro dipeptidase from Escherichia coli (strain SMS-3-5 / SECEC).